Reading from the N-terminus, the 915-residue chain is MPAAIDKDENIQKEGKRIELVKDSPKQFAASGAAAVSAQPNSDKLADVSPLHAERTVAQAQEASVSSFNEEEVIHDLQHYLPSQAPLKDFIHHNTLHAFQNYPFHEGTRRAKKIFGYFPSLQLREYRDLYEAGRIRKDILERVISEQKGAQHLEDWMQRLLEKEYDDSVSPRIGKLRANWKRHYPIDLDLMVHPLLFRILCSYLDQGISIWGFPIGHKGFLAALKEMEEKSFASFFKTKRAKKLLVSGNCKMADLLKLLVGDETLYAQYLFDQQFAHPGWSGMVASVEAQPASLLNPKNITVHDLVVFELLLEIDALDSYFGESWEPIAHILEERPEPLFADVPETEVDTVFSLWHDAFEWTYYDQVLTGIALQDKTWERKIENRSFQTYFCIDDRLTSFRRYLEQLDPDCETFTTAGFFNVELYYQPENGKFYTKCCPAPVFPKFLVKEIGNKQKIKKEVHFSKLTHSLFQGWFISQTIGFVSALRLALNVFKPGSMPAGASSYTHVDKNATLTIENKDPNDKENGLQIGFTIDEMVQRVQGVLTSTGLNGVDKTFAPIVYMIGHGASSVNNPHYTAYDCGACGGRPGSVNARTFCYMANHPKVREALKERGIIIPPTTQFLPGLHDTTRDEVAFFDEEILSEENAGKHRRNTLVINEALDLHAKERSRRLVSIDTKMSPKEIHEEIRRRSVSLFEPRPELNHATNAVSIIGRRSITENLFLDRRASTSTYDYRTDPEGKFLTMSMGPIALVMGGIDLEYFFSRTDNHKMGAGTKLPHNVMGLIGVANGADGDLRTGLPSQMIEIHDPVRLLVIIEHYPDVALKVIKSQTANYSFYENYWVHCLALHPDTGELWLYKDGSFSKIYKPLLNDLETVSDLSALMERAKKAESIETLDAVQENLPVYFIEKKERVKK.

Cys-392, Asp-394, His-566, and Cys-581 together coordinate Zn(2+).

It belongs to the inorganic carbon transporter (TC 9.A.2) DabA family. As to quaternary structure, forms a complex with DabB. Requires Zn(2+) as cofactor.

Its subcellular location is the cell inner membrane. Functionally, part of an energy-coupled inorganic carbon pump. The protein is Probable inorganic carbon transporter subunit DabA of Nitrosospira multiformis (strain ATCC 25196 / NCIMB 11849 / C 71).